Reading from the N-terminus, the 366-residue chain is Alanine racemase (366 aa).

Lys33 serves as the catalytic Proton acceptor; specific for D-alanine. Lys33 is modified (N6-(pyridoxal phosphate)lysine). Residue Arg129 participates in substrate binding. Tyr253 functions as the Proton acceptor; specific for L-alanine in the catalytic mechanism. Met301 contacts substrate.

It belongs to the alanine racemase family. It depends on pyridoxal 5'-phosphate as a cofactor.

It carries out the reaction L-alanine = D-alanine. It functions in the pathway amino-acid biosynthesis; D-alanine biosynthesis; D-alanine from L-alanine: step 1/1. Catalyzes the interconversion of L-alanine and D-alanine. May also act on other amino acids. The protein is Alanine racemase (alr) of Xanthomonas oryzae pv. oryzae (strain KACC10331 / KXO85).